A 629-amino-acid chain; its full sequence is Protein fem-1 homolog B (629 aa).

ANK repeat units lie at residues 47–77 (QRSTPLIIAARNGHSKVVRLLLEHYKVDVQQ), 89–118 (DGATALWCAAGAGHYEVVKLLVSHEANVNH), 122–151 (TNSTPLRAACFDGRLDIVRFLVENNANISI), 155–184 (YDNTCLMIAAYKGHSDVVHYLLRQHADPNA), 188–217 (CGATALHFAAEAGHLDIVRELVKWKAAMVV), and 220–250 (HGMTPLKVAAESCKADVVELLLAHSDCDAKS). One copy of the TPR repeat lies at 346-379 (SHPIIYRGAVYADNMQFEQCIKLWLHALQLRQKG). ANK repeat units follow at residues 485–529 (EGGS…NVNA) and 533–570 (MGNSPLHVIVQYNRPISDFLTLHAIIISLVEAGAHTDM).

It belongs to the fem-1 family. As to quaternary structure, component of a CRL2 E3 ubiquitin-protein ligase complex, also named ECS (Elongin BC-CUL2/5-SOCS-box protein) complex.

It is found in the cytoplasm. Its subcellular location is the nucleus. The protein operates within protein modification; protein ubiquitination. Substrate-recognition component of a Cul2-RING (CRL2) E3 ubiquitin-protein ligase complex of the DesCEND (destruction via C-end degrons) pathway, which recognizes a C-degron located at the extreme C terminus of target proteins, leading to their ubiquitination and degradation. The C-degron recognized by the DesCEND pathway is usually a motif of less than ten residues and can be present in full-length proteins, truncated proteins or proteolytically cleaved forms. The CRL2(FEM1B) complex specifically recognizes proteins ending with -Gly-Leu-Asp-Arg, leading to their ubiquitination and degradation. The polypeptide is Protein fem-1 homolog B (Xenopus laevis (African clawed frog)).